The following is a 1222-amino-acid chain: ATP-dependent helicase/nuclease subunit A (1222 aa).

The UvrD-like helicase ATP-binding domain maps to 39 to 495; that stretch reads QKRTAQQIEA…ILLKENFRSQ (457 aa). Residue 60-67 participates in ATP binding; that stretch reads ASAGSGKT. The 287-residue stretch at 524–810 folds into the UvrD-like helicase C-terminal domain; sequence QLIAGSHAQT…NLMTIHKSKG (287 aa).

The protein belongs to the helicase family. AddA subfamily. As to quaternary structure, heterodimer of AddA and AddB/RexB. The cofactor is Mg(2+).

The catalysed reaction is Couples ATP hydrolysis with the unwinding of duplex DNA by translocating in the 3'-5' direction.. The enzyme catalyses ATP + H2O = ADP + phosphate + H(+). The heterodimer acts as both an ATP-dependent DNA helicase and an ATP-dependent, dual-direction single-stranded exonuclease. Recognizes the chi site generating a DNA molecule suitable for the initiation of homologous recombination. The AddA nuclease domain is required for chi fragment generation; this subunit has the helicase and 3' -&gt; 5' nuclease activities. This Streptococcus pyogenes serotype M28 (strain MGAS6180) protein is ATP-dependent helicase/nuclease subunit A.